The primary structure comprises 422 residues: Glycine amidinotransferase, mitochondrial (422 aa).

A mitochondrion-targeting transit peptide spans 1–37; that stretch reads MLRVRCLRGGSRGAEAVHYIGSMLRKSFVGWVQRSFQ. Active-site residues include Asp253 and His302. Cys406 serves as the catalytic Amidino-cysteine intermediate.

It belongs to the amidinotransferase family. In terms of assembly, homodimer. As to expression, ubiquitously expressed in adult tissues, with highest levels in muscle and intermediate levels in eye, heart, liver, stomach and testis. In stage 28 embryos, expression is higher in the dorsal and ventral parts of the trunk than in the head. In middle gastrulae, expression is highest around the yolk plug, while in stage 15 and tailbud stage embryos, expression is largely restricted to the region around the presumptive notochord and gut.

Its subcellular location is the mitochondrion inner membrane. The enzyme catalyses L-arginine + glycine = guanidinoacetate + L-ornithine. It functions in the pathway amine and polyamine biosynthesis; creatine biosynthesis; creatine from L-arginine and glycine: step 1/2. Catalyzes the biosynthesis of guanidinoacetate, the immediate precursor of creatine. Creatine plays a vital role in energy metabolism in muscle tissues. May play a role in embryonic and central nervous system development. This is Glycine amidinotransferase, mitochondrial from Xenopus laevis (African clawed frog).